The chain runs to 284 residues: RNase adapter protein RapZ (284 aa).

Residue 8 to 15 (GRSGSGKS) coordinates ATP. 56-59 (DVRN) serves as a coordination point for GTP. The segment at 266 to 284 (RSRGKNVQSRHRTLEKRKT) is RNA-binding.

This sequence belongs to the RapZ-like family. RapZ subfamily. As to quaternary structure, homotrimer.

Modulates the synthesis of GlmS, by affecting the processing and stability of the regulatory small RNA GlmZ. When glucosamine-6-phosphate (GlcN6P) concentrations are high in the cell, RapZ binds GlmZ and targets it to cleavage by RNase E. Consequently, GlmZ is inactivated and unable to activate GlmS synthesis. Under low GlcN6P concentrations, RapZ is sequestered and inactivated by an other regulatory small RNA, GlmY, preventing GlmZ degradation and leading to synthesis of GlmS. The sequence is that of RNase adapter protein RapZ from Escherichia fergusonii (strain ATCC 35469 / DSM 13698 / CCUG 18766 / IAM 14443 / JCM 21226 / LMG 7866 / NBRC 102419 / NCTC 12128 / CDC 0568-73).